The following is a 147-amino-acid chain: Hemoglobin subunit gamma-2 (147 aa).

Residues 3-147 form the Globin domain; the sequence is HFTEEDKATI…VASALSSRYH (145 aa). Threonine 13 bears the Phosphothreonine mark. Phosphoserine occurs at positions 45, 51, and 53. N6-acetyllysine is present on lysine 60. Histidine 64 contributes to the heme b binding site. Residue lysine 83 is modified to N6-acetyllysine. Histidine 93 is a binding site for heme b. An S-nitrosocysteine modification is found at cysteine 94. Phosphoserine occurs at positions 140, 143, and 144.

It belongs to the globin family. In terms of assembly, heterotetramer of two alpha chains and two gamma chains in fetal hemoglobin (Hb F). In terms of tissue distribution, red blood cells.

In terms of biological role, gamma chains make up the fetal hemoglobin F, in combination with alpha chains. The chain is Hemoglobin subunit gamma-2 (HBG2) from Gorilla gorilla gorilla (Western lowland gorilla).